The primary structure comprises 490 residues: 3-octaprenyl-4-hydroxybenzoate carboxy-lyase (490 aa).

Residue N172 participates in Mn(2+) binding. Prenylated FMN contacts are provided by residues 175–177, 189–191, and 194–195; these read IYR, RWL, and RG. E238 provides a ligand contact to Mn(2+). Catalysis depends on D287, which acts as the Proton donor.

This sequence belongs to the UbiD family. As to quaternary structure, homohexamer. The cofactor is prenylated FMN. Mn(2+) serves as cofactor.

Its subcellular location is the cell membrane. It catalyses the reaction a 4-hydroxy-3-(all-trans-polyprenyl)benzoate + H(+) = a 2-(all-trans-polyprenyl)phenol + CO2. It participates in cofactor biosynthesis; ubiquinone biosynthesis. Functionally, catalyzes the decarboxylation of 3-octaprenyl-4-hydroxy benzoate to 2-octaprenylphenol, an intermediate step in ubiquinone biosynthesis. The sequence is that of 3-octaprenyl-4-hydroxybenzoate carboxy-lyase from Idiomarina loihiensis (strain ATCC BAA-735 / DSM 15497 / L2-TR).